A 333-amino-acid polypeptide reads, in one-letter code: Phosphate acyltransferase (333 aa).

The protein belongs to the PlsX family. Homodimer. Probably interacts with PlsY.

It is found in the cytoplasm. It catalyses the reaction a fatty acyl-[ACP] + phosphate = an acyl phosphate + holo-[ACP]. It participates in lipid metabolism; phospholipid metabolism. In terms of biological role, catalyzes the reversible formation of acyl-phosphate (acyl-PO(4)) from acyl-[acyl-carrier-protein] (acyl-ACP). This enzyme utilizes acyl-ACP as fatty acyl donor, but not acyl-CoA. The protein is Phosphate acyltransferase of Lactobacillus johnsonii (strain CNCM I-12250 / La1 / NCC 533).